A 40-amino-acid chain; its full sequence is Cytolysin EnT (40 aa).

The tract at residues 3–12 (ALAGTIIEGA) is plays an important role in the hemolytic activity. Residues 11 to 30 (GASLTFSVLTTILDALGSVS) are N-terminal region.

This sequence belongs to the actinoporin family. Sea anemone subfamily. Octamer or nonamer in membranes. Monomer in the soluble state.

It localises to the secreted. It is found in the nematocyst. Its subcellular location is the target cell membrane. In terms of biological role, pore-forming protein that forms cations-selective hydrophilic pores of around 1 nm and causes cytolysis. Pore formation is a multi-step process that involves specific recognition of membrane sphingomyelin (but neither cholesterol nor phosphatidylcholine) using aromatic rich region and adjacent phosphocholine (POC) binding site, firm binding to the membrane (mainly driven by hydrophobic interactions) accompanied by the transfer of the N-terminal region to the lipid-water interface and finally pore formation after oligomerization of monomers. This toxin shows hemolytic activities. The polypeptide is Cytolysin EnT (Entacmaea quadricolor (Bubble-tip anemone)).